Here is a 335-residue protein sequence, read N- to C-terminus: Zinc-type alcohol dehydrogenase-like protein SAR2277 (335 aa).

Belongs to the zinc-containing alcohol dehydrogenase family. Quinone oxidoreductase subfamily.

The polypeptide is Zinc-type alcohol dehydrogenase-like protein SAR2277 (Staphylococcus aureus (strain MRSA252)).